The chain runs to 345 residues: AA9 family lytic polysaccharide monooxygenase D (345 aa).

An N-terminal signal peptide occupies residues 1–21 (MPSFTSKTLLAALAGAAAVNA). Positions 22 and 107 each coordinate Cu(2+). Cys-77 and Cys-200 are joined by a disulfide. Residue Asn-160 is glycosylated (N-linked (GlcNAc...) asparagine). Residues His-186 and Gln-195 each contribute to the O2 site. A Cu(2+)-binding site is contributed by Tyr-197. The tract at residues 315-345 (VQTSTRPISTRPQPTRCPGLGRRHLRKVARA) is disordered. Residues 318–327 (STRPISTRPQ) are compositionally biased toward polar residues. The span at 335–345 (GRRHLRKVARA) shows a compositional bias: basic residues.

Belongs to the polysaccharide monooxygenase AA9 family. Requires Cu(2+) as cofactor.

It is found in the secreted. It carries out the reaction [(1-&gt;4)-beta-D-glucosyl]n+m + reduced acceptor + O2 = 4-dehydro-beta-D-glucosyl-[(1-&gt;4)-beta-D-glucosyl]n-1 + [(1-&gt;4)-beta-D-glucosyl]m + acceptor + H2O.. Its function is as follows. Lytic polysaccharide monooxygenase (LPMO) that depolymerizes crystalline and amorphous polysaccharides via the oxidation of scissile alpha- or beta-(1-4)-glycosidic bonds, yielding C1 or C4 oxidation products. Catalysis by LPMOs requires the reduction of the active-site copper from Cu(II) to Cu(I) by a reducing agent and H(2)O(2) or O(2) as a cosubstrate. This Podospora anserina (strain S / ATCC MYA-4624 / DSM 980 / FGSC 10383) (Pleurage anserina) protein is AA9 family lytic polysaccharide monooxygenase D.